The primary structure comprises 126 residues: DNA-directed RNA polymerase subunit omega (126 aa).

The protein belongs to the RNA polymerase subunit omega family. In terms of assembly, the RNAP catalytic core consists of 2 alpha, 1 beta, 1 beta' and 1 omega subunit. When a sigma factor is associated with the core the holoenzyme is formed, which can initiate transcription.

The catalysed reaction is RNA(n) + a ribonucleoside 5'-triphosphate = RNA(n+1) + diphosphate. Promotes RNA polymerase assembly. Latches the N- and C-terminal regions of the beta' subunit thereby facilitating its interaction with the beta and alpha subunits. The sequence is that of DNA-directed RNA polymerase subunit omega from Rickettsia bellii (strain OSU 85-389).